A 133-amino-acid chain; its full sequence is Small ribosomal subunit protein uS8 (133 aa).

It belongs to the universal ribosomal protein uS8 family. In terms of assembly, part of the 30S ribosomal subunit. Contacts proteins S5 and S12.

Functionally, one of the primary rRNA binding proteins, it binds directly to 16S rRNA central domain where it helps coordinate assembly of the platform of the 30S subunit. In Leptospira borgpetersenii serovar Hardjo-bovis (strain JB197), this protein is Small ribosomal subunit protein uS8.